A 246-amino-acid polypeptide reads, in one-letter code: Phosphomannomutase (246 aa).

The active-site Nucleophile is the D13. Mg(2+) contacts are provided by D13 and D15. The Proton donor/acceptor role is filled by D15. Alpha-D-mannose 1-phosphate is bound by residues R22, R124, R135, R142, S180, and D182. Mg(2+) is bound by residues D208, Y220, and T225.

This sequence belongs to the eukaryotic PMM family. In terms of assembly, homodimer. Mg(2+) serves as cofactor. In terms of tissue distribution, expressed in roots, stems, leaves, flowers and immature fruits.

The protein localises to the cytoplasm. The catalysed reaction is alpha-D-mannose 1-phosphate = D-mannose 6-phosphate. Its pathway is nucleotide-sugar biosynthesis; GDP-alpha-D-mannose biosynthesis; alpha-D-mannose 1-phosphate from D-fructose 6-phosphate: step 2/2. Catalyzes the interconversion of mannose-6-phosphate to mannose-1-phosphate, the precursor for the synthesis of GDP-mannose. GDP-mannose is an essential sugar nucleotide for the synthesis of D-mannose-containing cell wall polysaccharides (galactomannans and glucomannans), glycolipids, glycoproteins and the antioxidant L-ascorbate. Can complement the yeast temperature-sensitive mutant sec53-6. This Arabidopsis thaliana (Mouse-ear cress) protein is Phosphomannomutase.